Consider the following 116-residue polypeptide: Iron-sulfur cluster insertion protein ErpA (116 aa).

Iron-sulfur cluster contacts are provided by C44, C108, and C110.

It belongs to the HesB/IscA family. In terms of assembly, homodimer. Iron-sulfur cluster serves as cofactor.

Its function is as follows. Required for insertion of 4Fe-4S clusters for at least IspG. This chain is Iron-sulfur cluster insertion protein ErpA, found in Aeromonas hydrophila subsp. hydrophila (strain ATCC 7966 / DSM 30187 / BCRC 13018 / CCUG 14551 / JCM 1027 / KCTC 2358 / NCIMB 9240 / NCTC 8049).